The sequence spans 130 residues: MAVKKRAGAKKKEKKVIPVGKAFVQATFNNTIVTLTDLQGNVIAWASCGTAGFKGSRKGTPYAAQMAAQAAARKAAESGLRQVEVLVKGPGSGREAAIRSLQASGINVTAIRDVTPIPHNGCRPPKRRRV.

This sequence belongs to the universal ribosomal protein uS11 family. In terms of assembly, part of the 30S ribosomal subunit. Interacts with proteins S7 and S18. Binds to IF-3.

Located on the platform of the 30S subunit, it bridges several disparate RNA helices of the 16S rRNA. Forms part of the Shine-Dalgarno cleft in the 70S ribosome. This Dehalococcoides mccartyi (strain ATCC BAA-2266 / KCTC 15142 / 195) (Dehalococcoides ethenogenes (strain 195)) protein is Small ribosomal subunit protein uS11.